A 90-amino-acid polypeptide reads, in one-letter code: Elongation factor 1-beta (90 aa).

This sequence belongs to the EF-1-beta/EF-1-delta family.

Its function is as follows. Promotes the exchange of GDP for GTP in EF-1-alpha/GDP, thus allowing the regeneration of EF-1-alpha/GTP that could then be used to form the ternary complex EF-1-alpha/GTP/AAtRNA. In Desulfurococcus amylolyticus (strain DSM 18924 / JCM 16383 / VKM B-2413 / 1221n) (Desulfurococcus kamchatkensis), this protein is Elongation factor 1-beta.